Consider the following 419-residue polypeptide: Glutamyl-tRNA reductase (419 aa).

Residues 49–52 (TCNR), Ser-107, 112–114 (EPQ), and Gln-118 contribute to the substrate site. Cys-50 functions as the Nucleophile in the catalytic mechanism. NADP(+) is bound at residue 187–192 (GAGETI).

This sequence belongs to the glutamyl-tRNA reductase family. As to quaternary structure, homodimer.

The enzyme catalyses (S)-4-amino-5-oxopentanoate + tRNA(Glu) + NADP(+) = L-glutamyl-tRNA(Glu) + NADPH + H(+). Its pathway is porphyrin-containing compound metabolism; protoporphyrin-IX biosynthesis; 5-aminolevulinate from L-glutamyl-tRNA(Glu): step 1/2. Functionally, catalyzes the NADPH-dependent reduction of glutamyl-tRNA(Glu) to glutamate 1-semialdehyde (GSA). This chain is Glutamyl-tRNA reductase, found in Vibrio atlanticus (strain LGP32) (Vibrio splendidus (strain Mel32)).